Here is a 95-residue protein sequence, read N- to C-terminus: Aspartyl/glutamyl-tRNA(Asn/Gln) amidotransferase subunit C (95 aa).

The protein belongs to the GatC family. Heterotrimer of A, B and C subunits.

It carries out the reaction L-glutamyl-tRNA(Gln) + L-glutamine + ATP + H2O = L-glutaminyl-tRNA(Gln) + L-glutamate + ADP + phosphate + H(+). The enzyme catalyses L-aspartyl-tRNA(Asn) + L-glutamine + ATP + H2O = L-asparaginyl-tRNA(Asn) + L-glutamate + ADP + phosphate + 2 H(+). Functionally, allows the formation of correctly charged Asn-tRNA(Asn) or Gln-tRNA(Gln) through the transamidation of misacylated Asp-tRNA(Asn) or Glu-tRNA(Gln) in organisms which lack either or both of asparaginyl-tRNA or glutaminyl-tRNA synthetases. The reaction takes place in the presence of glutamine and ATP through an activated phospho-Asp-tRNA(Asn) or phospho-Glu-tRNA(Gln). The chain is Aspartyl/glutamyl-tRNA(Asn/Gln) amidotransferase subunit C from Chromobacterium violaceum (strain ATCC 12472 / DSM 30191 / JCM 1249 / CCUG 213 / NBRC 12614 / NCIMB 9131 / NCTC 9757 / MK).